The following is a 199-amino-acid chain: Glycerol-3-phosphate acyltransferase (199 aa).

5 consecutive transmembrane segments (helical) span residues leucine 4 to glycine 24, tryptophan 51 to glycine 71, glutamate 77 to leucine 97, valine 111 to valine 131, and leucine 152 to isoleucine 172.

It belongs to the PlsY family. In terms of assembly, probably interacts with PlsX.

It is found in the cell membrane. The enzyme catalyses an acyl phosphate + sn-glycerol 3-phosphate = a 1-acyl-sn-glycero-3-phosphate + phosphate. Its pathway is lipid metabolism; phospholipid metabolism. Functionally, catalyzes the transfer of an acyl group from acyl-phosphate (acyl-PO(4)) to glycerol-3-phosphate (G3P) to form lysophosphatidic acid (LPA). This enzyme utilizes acyl-phosphate as fatty acyl donor, but not acyl-CoA or acyl-ACP. The sequence is that of Glycerol-3-phosphate acyltransferase from Symbiobacterium thermophilum (strain DSM 24528 / JCM 14929 / IAM 14863 / T).